Consider the following 351-residue polypeptide: Transmembrane protein 255A (351 aa).

A run of 4 helical transmembrane segments spans residues 30 to 50, 57 to 77, 89 to 109, and 226 to 246; these read IYVT…GLAA, VTVG…LGII, LVAS…CAIV, and TILN…LGGF. The disordered stretch occupies residues 302 to 331; the sequence is FPSSPPSGLSDEQEPQSPSPSPSYMWSSSA.

The protein belongs to the TMEM255 family.

The protein resides in the membrane. This is Transmembrane protein 255A (Tmem255a) from Rattus norvegicus (Rat).